Reading from the N-terminus, the 473-residue chain is Aspartyl/glutamyl-tRNA(Asn/Gln) amidotransferase subunit B (473 aa).

Belongs to the GatB/GatE family. GatB subfamily. In terms of assembly, heterotrimer of A, B and C subunits.

It carries out the reaction L-glutamyl-tRNA(Gln) + L-glutamine + ATP + H2O = L-glutaminyl-tRNA(Gln) + L-glutamate + ADP + phosphate + H(+). The enzyme catalyses L-aspartyl-tRNA(Asn) + L-glutamine + ATP + H2O = L-asparaginyl-tRNA(Asn) + L-glutamate + ADP + phosphate + 2 H(+). Its function is as follows. Allows the formation of correctly charged Asn-tRNA(Asn) or Gln-tRNA(Gln) through the transamidation of misacylated Asp-tRNA(Asn) or Glu-tRNA(Gln) in organisms which lack either or both of asparaginyl-tRNA or glutaminyl-tRNA synthetases. The reaction takes place in the presence of glutamine and ATP through an activated phospho-Asp-tRNA(Asn) or phospho-Glu-tRNA(Gln). This chain is Aspartyl/glutamyl-tRNA(Asn/Gln) amidotransferase subunit B, found in Finegoldia magna (strain ATCC 29328 / DSM 20472 / WAL 2508) (Peptostreptococcus magnus).